The following is a 105-amino-acid chain: Ribonuclease P protein component 4 (105 aa).

Residues Cys63, Cys66, Cys89, and Cys92 each contribute to the Zn(2+) site.

This sequence belongs to the eukaryotic/archaeal RNase P protein component 4 family. As to quaternary structure, consists of a catalytic RNA component and at least 4-5 protein subunits. Zn(2+) is required as a cofactor.

Its subcellular location is the cytoplasm. The enzyme catalyses Endonucleolytic cleavage of RNA, removing 5'-extranucleotides from tRNA precursor.. Part of ribonuclease P, a protein complex that generates mature tRNA molecules by cleaving their 5'-ends. This is Ribonuclease P protein component 4 from Methanoculleus marisnigri (strain ATCC 35101 / DSM 1498 / JR1).